The sequence spans 175 residues: Large ribosomal subunit protein uL10 (175 aa).

This sequence belongs to the universal ribosomal protein uL10 family. In terms of assembly, part of the ribosomal stalk of the 50S ribosomal subunit. The N-terminus interacts with L11 and the large rRNA to form the base of the stalk. The C-terminus forms an elongated spine to which L12 dimers bind in a sequential fashion forming a multimeric L10(L12)X complex.

Forms part of the ribosomal stalk, playing a central role in the interaction of the ribosome with GTP-bound translation factors. In Synechococcus sp. (strain CC9311), this protein is Large ribosomal subunit protein uL10.